A 468-amino-acid polypeptide reads, in one-letter code: MGVFGSNESSSMSIVMYPWLAFGHMTPFLHLSNKLAEKGHKIVFLLPKKALNQLEPLNLYPNLITFHTISIPQVKGLPPGAETNSDVPFFLTHLLAVAMDQTRPEVETIFRTIKPDLVFYDSAHWIPEIAKPIGAKTVCFNIVSAASIALSLVPSAEREVIDGKEMSGEELAKTPLGYPSSKVVLRPHEAKSLSFVWRKHEAIGSFFDGKVTAMRNCDAIAIRTCRETEGKFCDYISRQYSKPVYLTGPVLPGSQPNQPSLDPQWAEWLAKFNHGSVVFCAFGSQPVVNKIDQFQELCLGLESTGFPFLVAIKPPSGVSTVEEALPEGFKERVQGRGVVFGGWIQQPLVLNHPSVGCFVSHCGFGSMWESLMSDCQIVLVPQHGEQILNARLMTEEMEVAVEVEREKKGWFSRQSLENAVKSVMEEGSEIGEKVRKNHDKWRCVLTDSGFSDGYIDKFEQNLIELVKS.

UDP-alpha-D-xylose is bound by residues Ser-284, 344–346, 361–369, and 383–386; these read IQQ, HCGFGSMWE, and HGEQ.

Belongs to the UDP-glycosyltransferase family.

The enzyme catalyses an anthocyanidin 3-O-beta-D-glucoside + UDP-alpha-D-xylose = an anthocyanidin 3-O-beta-D-sambubioside + UDP + 2 H(+). The protein operates within secondary metabolite biosynthesis; flavonoid biosynthesis. Contributes to the last few anthocyanin biosynthetic steps. Converts cyanidin 3-O-glucoside to cyanidin 3-O-xylosyl(1-&gt;2)glucoside. Can use 3-O-glucosylated anthocyanidins/flavonols and uridine diphosphate (UDP)-xylose as substrates. This Arabidopsis thaliana (Mouse-ear cress) protein is Anthocyanidin 3-O-glucoside 2'''-O-xylosyltransferase (A3G2XYLT).